Reading from the N-terminus, the 131-residue chain is Fluoride-specific ion channel FluC (131 aa).

4 helical membrane passes run 4 to 24, 30 to 50, 68 to 88, and 104 to 124; these read LWIMIGSALGGAARFWVTGFV, GIFPWGTVLINVSGSFLIGFF, LFVMIGLCGGFTTFSSFSLQT, and IALSVVFCLLAVWLGHVVAVA. The Na(+) site is built by G76 and T79.

The protein belongs to the fluoride channel Fluc/FEX (TC 1.A.43) family.

It localises to the cell inner membrane. The enzyme catalyses fluoride(in) = fluoride(out). Na(+) is not transported, but it plays an essential structural role and its presence is essential for fluoride channel function. Its function is as follows. Fluoride-specific ion channel. Important for reducing fluoride concentration in the cell, thus reducing its toxicity. This chain is Fluoride-specific ion channel FluC, found in Methylocella silvestris (strain DSM 15510 / CIP 108128 / LMG 27833 / NCIMB 13906 / BL2).